We begin with the raw amino-acid sequence, 749 residues long: Chaperone protein dnaK3 (749 aa).

Residue T198 is modified to Phosphothreonine; by autocatalysis. Basic and acidic residues-rich tracts occupy residues 643 to 653, 661 to 694, and 711 to 724; these read RWDADPWDRSR, YDDRRSPVSDPYRGERWVEEQTSMSRREPVRDRN, and PTWEEDQPPRRDRS. A disordered region spans residues 643 to 749; the sequence is RWDADPWDRS…GWDDDDDEWF (107 aa). The span at 740-749 shows a compositional bias: acidic residues; it reads GWDDDDDEWF.

The protein belongs to the heat shock protein 70 family.

In terms of biological role, acts as a chaperone. This chain is Chaperone protein dnaK3 (dnaK3), found in Synechococcus elongatus (strain ATCC 33912 / PCC 7942 / FACHB-805) (Anacystis nidulans R2).